A 371-amino-acid polypeptide reads, in one-letter code: N-acetyllactosaminide alpha-2,3-sialyltransferase (371 aa).

Gly-255 contacts CMP-N-acetyl-beta-neuraminate. Asp-258 functions as the Proton acceptor in the catalytic mechanism. CMP-N-acetyl-beta-neuraminate-binding positions include Ala-278–Arg-282, Ile-299–Glu-300, and Ser-322–Gly-323. His-280 acts as the Proton donor in catalysis.

The protein belongs to the glycosyltransferase 52 family. Homodimer.

It is found in the cell outer membrane. It carries out the reaction a beta-D-galactosyl-(1-&gt;4)-N-acetyl-beta-D-glucosaminyl derivative + CMP-N-acetyl-beta-neuraminate = an N-acetyl-alpha-neuraminyl-(2-&gt;3)-beta-D-galactosyl-(1-&gt;4)-N-acetyl-beta-D-glucosaminyl derivative + CMP + H(+). It participates in bacterial outer membrane biogenesis; lipooligosaccharide biosynthesis. Catalyzes the transfer of sialic acid from the substrate CMP-N-acetylneuraminate to the terminal galactose residue of the lacto-N-neotetraose branch of surface lipooligosaccharide (LOS), forming an alpha-2,3-sialyl linkage. Thus, functions in the sialylation of LOS, which plays a role in the evasion of the host immune response by protecting N.meningitidis from complement-mediated serum killing and from phagocytic killing by neutrophils. This is N-acetyllactosaminide alpha-2,3-sialyltransferase from Neisseria meningitidis serogroup A / serotype 4A (strain DSM 15465 / Z2491).